A 205-amino-acid polypeptide reads, in one-letter code: Small ribosomal subunit protein uS4 (205 aa).

The segment at 18-46 is disordered; the sequence is NIWGRPKSPVNRREYGPGQHGQRRKGKLS. Residues 94 to 157 form the S4 RNA-binding domain; that stretch reads RRLDTVVFRA…KQLAIVLEAT (64 aa).

It belongs to the universal ribosomal protein uS4 family. In terms of assembly, part of the 30S ribosomal subunit. Contacts protein S5. The interaction surface between S4 and S5 is involved in control of translational fidelity.

In terms of biological role, one of the primary rRNA binding proteins, it binds directly to 16S rRNA where it nucleates assembly of the body of the 30S subunit. Its function is as follows. With S5 and S12 plays an important role in translational accuracy. The polypeptide is Small ribosomal subunit protein uS4 (Bradyrhizobium sp. (strain BTAi1 / ATCC BAA-1182)).